A 336-amino-acid chain; its full sequence is Dihydroorotate dehydrogenase (quinone) (336 aa).

FMN contacts are provided by residues 62-66 and T86; that span reads AGLDK. K66 is a binding site for substrate. 111–115 provides a ligand contact to substrate; that stretch reads NRMGF. N139 and N172 together coordinate FMN. N172 is a binding site for substrate. S175 (nucleophile) is an active-site residue. N177 lines the substrate pocket. K217 and T245 together coordinate FMN. Residue 246 to 247 participates in substrate binding; sequence NT. Residues G268, G297, and 318 to 319 contribute to the FMN site; that span reads YS.

The protein belongs to the dihydroorotate dehydrogenase family. Type 2 subfamily. As to quaternary structure, monomer. FMN serves as cofactor.

It localises to the cell membrane. The enzyme catalyses (S)-dihydroorotate + a quinone = orotate + a quinol. It functions in the pathway pyrimidine metabolism; UMP biosynthesis via de novo pathway; orotate from (S)-dihydroorotate (quinone route): step 1/1. Functionally, catalyzes the conversion of dihydroorotate to orotate with quinone as electron acceptor. The sequence is that of Dihydroorotate dehydrogenase (quinone) from Aliivibrio fischeri (strain ATCC 700601 / ES114) (Vibrio fischeri).